The sequence spans 384 residues: MTWQQRITTALEKRRATDAFRVRTVVEGGAGRFLIRDQCQFCNFSSNDYLGLSQHPAIVRAWQDGAERYGVGSGGSGHVSGYTTAHHALEESLADWLGYSRALLFISGFAANQALIAALMEKDDRIVADRLSHASLLEAANLSPAQLRRFAHNDASQLNTLLEKPCDGQQLVVTEGVFSMDGDSAPLGDVQATAQRHSAWLLVDDAHGIGVLGDEGRGSAFSQHVQPEVLVVTFGKGFGVSGAAVLCSDSVADYLLQFARHLIYSTSMPPAQAVALQAALKVIRSDDGEQRRQTLAALIQRFRAGVRDLPYQTTDSHSAIQPLIVGENSRALTLAEQLRERNMWVTAIRPPTVPAGTARLRLTLTAAHQTQDIDNVLEALYAAG.

A substrate-binding site is contributed by arginine 21. A pyridoxal 5'-phosphate-binding site is contributed by 108–109 (GF). Histidine 133 contributes to the substrate binding site. Residues serine 179, histidine 207, and threonine 233 each contribute to the pyridoxal 5'-phosphate site. Lysine 236 is modified (N6-(pyridoxal phosphate)lysine). Threonine 352 is a substrate binding site.

This sequence belongs to the class-II pyridoxal-phosphate-dependent aminotransferase family. BioF subfamily. Homodimer. Requires pyridoxal 5'-phosphate as cofactor.

It catalyses the reaction 6-carboxyhexanoyl-[ACP] + L-alanine + H(+) = (8S)-8-amino-7-oxononanoate + holo-[ACP] + CO2. Its pathway is cofactor biosynthesis; biotin biosynthesis. In terms of biological role, catalyzes the decarboxylative condensation of pimeloyl-[acyl-carrier protein] and L-alanine to produce 8-amino-7-oxononanoate (AON), [acyl-carrier protein], and carbon dioxide. The sequence is that of 8-amino-7-oxononanoate synthase from Enterobacter sp. (strain 638).